The chain runs to 532 residues: Pentatricopeptide repeat-containing protein At5g66500, mitochondrial (532 aa).

Residues 1 to 33 (MFACLRIGRFIRLGNVTVKSTNLVLRCVFIRNF) constitute a mitochondrion transit peptide. PPR repeat units follow at residues 48 to 82 (DLSS…SPDL), 83 to 117 (SSHT…GAET), 118 to 148 (GTIS…VEEK), 149 to 183 (DLVS…RVEI), 184 to 218 (SEFT…GRDL), 223 to 248 (TAMI…LNVH), 250 to 280 (DEVM…QRPN), 281 to 314 (VRVL…GFVS), 315 to 345 (DSKL…IPSK), 346 to 380 (SVVS…GSGV), 383 to 413 (NSVT…MKEK), and 419 to 453 (GTEH…DNQS). The type E motif; degenerate stretch occupies residues 458–532 (IWVAVLSACS…VKTAGHSLFI (75 aa)).

The protein belongs to the PPR family. PCMP-E subfamily.

Its subcellular location is the mitochondrion. In Arabidopsis thaliana (Mouse-ear cress), this protein is Pentatricopeptide repeat-containing protein At5g66500, mitochondrial (PCMP-E38).